A 107-amino-acid chain; its full sequence is MQFSTTPTLEGQPIVEYCGVVTGEAILGANIFRDFFAGIRDIVGGRSGAYEKELRKAREIAFKELGEQAKALGADAVVGIDIDYETVGKDASMLMVSVSGTAVKTRR.

It belongs to the UPF0145 family.

In Enterobacter sp. (strain 638), this protein is UPF0145 protein Ent638_1382.